The following is a 196-amino-acid chain: Putative acetyltransferase YJL218W (196 aa).

Asn84 is a binding site for acetyl-CoA. The Proton donor/acceptor role is filled by His114. Residues Gly141, Ala159, 164–165 (IR), Lys179, and Arg182 each bind acetyl-CoA.

Belongs to the transferase hexapeptide repeat family. In terms of assembly, homodimer.

The chain is Putative acetyltransferase YJL218W from Saccharomyces cerevisiae (strain ATCC 204508 / S288c) (Baker's yeast).